The sequence spans 414 residues: Probable tRNA pseudouridine synthase D (414 aa).

D90 (nucleophile) is an active-site residue. The TRUD domain occupies 162-382; sequence GFPNFFGVQR…SSGDYRIISA (221 aa).

The protein belongs to the pseudouridine synthase TruD family.

It catalyses the reaction uridine(13) in tRNA = pseudouridine(13) in tRNA. Could be responsible for synthesis of pseudouridine from uracil-13 in transfer RNAs. The sequence is that of Probable tRNA pseudouridine synthase D from Picrophilus torridus (strain ATCC 700027 / DSM 9790 / JCM 10055 / NBRC 100828 / KAW 2/3).